Here is a 168-residue protein sequence, read N- to C-terminus: Transcriptional repressor NrdR (168 aa).

Positions 1-21 (MQCPACRHTDSRVLESRSSES) are disordered. The segment at 3–34 (CPACRHTDSRVLESRSSESGRSVRRRRECLSC) is a zinc-finger region. The segment covering 7 to 20 (RHTDSRVLESRSSE) has biased composition (basic and acidic residues). The ATP-cone domain occupies 49–139 (ISVIKRNGDR…VYRQFRGVRD (91 aa)).

Belongs to the NrdR family. Requires Zn(2+) as cofactor.

Functionally, negatively regulates transcription of bacterial ribonucleotide reductase nrd genes and operons by binding to NrdR-boxes. This Synechococcus elongatus (strain ATCC 33912 / PCC 7942 / FACHB-805) (Anacystis nidulans R2) protein is Transcriptional repressor NrdR.